The sequence spans 87 residues: Small ribosomal subunit protein eS21 (87 aa).

Belongs to the eukaryotic ribosomal protein eS21 family. Component of the small ribosomal subunit (SSU). Mature N.crassa ribosomes consist of a small (40S) and a large (60S) subunit. The 40S small subunit contains 1 molecule of ribosomal RNA (18S rRNA) and at least 32 different proteins. The large 60S subunit contains 3 rRNA molecules (26S, 5.8S and 5S rRNA) and at least 42 different proteins.

It is found in the cytoplasm. In terms of biological role, component of the ribosome, a large ribonucleoprotein complex responsible for the synthesis of proteins in the cell. The small ribosomal subunit (SSU) binds messenger RNAs (mRNAs) and translates the encoded message by selecting cognate aminoacyl-transfer RNA (tRNA) molecules. The large subunit (LSU) contains the ribosomal catalytic site termed the peptidyl transferase center (PTC), which catalyzes the formation of peptide bonds, thereby polymerizing the amino acids delivered by tRNAs into a polypeptide chain. The nascent polypeptides leave the ribosome through a tunnel in the LSU and interact with protein factors that function in enzymatic processing, targeting, and the membrane insertion of nascent chains at the exit of the ribosomal tunnel. The sequence is that of Small ribosomal subunit protein eS21 (crp-7) from Neurospora crassa (strain ATCC 24698 / 74-OR23-1A / CBS 708.71 / DSM 1257 / FGSC 987).